A 158-amino-acid polypeptide reads, in one-letter code: Transcription elongation factor GreB (158 aa).

This sequence belongs to the GreA/GreB family. GreB subfamily.

Functionally, necessary for efficient RNA polymerase transcription elongation past template-encoded arresting sites. The arresting sites in DNA have the property of trapping a certain fraction of elongating RNA polymerases that pass through, resulting in locked ternary complexes. Cleavage of the nascent transcript by cleavage factors such as GreA or GreB allows the resumption of elongation from the new 3'terminus. GreB releases sequences of up to 9 nucleotides in length. The polypeptide is Transcription elongation factor GreB (Escherichia coli O157:H7).